A 345-amino-acid polypeptide reads, in one-letter code: Linoleate 10R-lipoxygenase COP4 (345 aa).

Positions 87, 91, 222, 226, and 230 each coordinate Mg(2+). Positions 87-91 (DEISD) match the DDXXD motif motif.

Belongs to the terpene synthase family. It depends on Mg(2+) as a cofactor.

It catalyses the reaction (2E,6E)-farnesyl diphosphate + H2O = cubebol + diphosphate. The catalysed reaction is (2E,6E)-farnesyl diphosphate = beta-copaene + diphosphate. It carries out the reaction (2E,6E)-farnesyl diphosphate = beta-cubebene + diphosphate. The enzyme catalyses (2E,6E)-farnesyl diphosphate = (+)-sativene + diphosphate. In terms of biological role, sesquiterpene synthase that catalyzes the cyclization of farnesyl diphosphate (FPP) into multiple products, including germacrene D, beta-copaene, beta-cubebene, (+)-sativene and cubebol, a natural sesquiterpene alcohol used in the food industry for its cooling and refreshing taste. Terpenoid hydrocarbons resulting from cyclization of farnesyl diphosphate are intermediates in the biosynthesis of biologically active compounds such as antibiotics, toxins and pheromones. This chain is Linoleate 10R-lipoxygenase COP4 (COP4), found in Coprinopsis cinerea (strain Okayama-7 / 130 / ATCC MYA-4618 / FGSC 9003) (Inky cap fungus).